We begin with the raw amino-acid sequence, 907 residues long: CRM-domain containing factor CFM3B, chloroplastic (907 aa).

A chloroplast-targeting transit peptide spans 1 to 59; it reads MAINSSHHFCPMTTTTTTSAKFVDSLGSSFCKFHGTSSSISLRSYRFGFSFMKNVKRLS. Disordered stretches follow at residues 62–89 and 101–123; these read GSSS…SKVV and LGVI…GSSS. Over residues 70-84 the composition is skewed to polar residues; the sequence is RNENWNRTQKQNQFR. 2 consecutive CRM domains span residues 220 to 316 and 421 to 518; these read MTLS…DGSG and STLG…EVGE. The stretch at 621-654 forms a coiled coil; that stretch reads SAKLVRKLERKLAFAEKKLLKAERALAKVEESLK. Positions 663 to 763 constitute a CRM 3 domain; it reads EGITEEERFM…KDYKRPTTLR (101 aa). The interval 824-907 is disordered; that stretch reads MAYSSDEETE…LQNEELDVQP (84 aa). 2 stretches are compositionally biased toward acidic residues: residues 828–857 and 868–881; these read SDEE…DEEG and TDVE…DTDF. A compositionally biased stretch (polar residues) spans 882–897; the sequence is GDNSASSTTPETTFVE.

As to quaternary structure, interacts with RNA. Part of large ribonucleo-protein particles that contain CAF1 and/or CAF2, and RNC1. Interacts with RFC3 in plastids. As to expression, expressed at low levels in roots and shoots.

It is found in the plastid. It localises to the chloroplast. In terms of biological role, binds specific group II introns in chloroplasts and facilitates their splicing. Exhibits non-specific action during plastid rRNA biogenesis; RFC3 prevents unaccurate splicing to improve the accuracy of plastid rRNA processing. Acts on subgroup IIB introns. The substrates of the subgroup IIB also require the CRM domain proteins CAF1 or CAF2, with a simultaneous binding of CFM3B and CAF1 or CAF2. Required for seed development. The chain is CRM-domain containing factor CFM3B, chloroplastic from Arabidopsis thaliana (Mouse-ear cress).